Reading from the N-terminus, the 823-residue chain is Leucine--tRNA ligase (823 aa).

Residues 41–51 (PYPSGTLHVGH) carry the 'HIGH' region motif. Residues 580–584 (KMSKS) carry the 'KMSKS' region motif. Lys583 contacts ATP.

The protein belongs to the class-I aminoacyl-tRNA synthetase family.

The protein localises to the cytoplasm. It carries out the reaction tRNA(Leu) + L-leucine + ATP = L-leucyl-tRNA(Leu) + AMP + diphosphate. This chain is Leucine--tRNA ligase, found in Thermosipho melanesiensis (strain DSM 12029 / CIP 104789 / BI429).